Reading from the N-terminus, the 130-residue chain is HTH-type transcriptional regulator KmtR (130 aa).

Positions 10-104 (LPDDQVCLVV…DAVFNAEHAG (95 aa)) constitute an HTH arsR-type domain. The segment at residues 44 to 67 (VNELAEQVGKPAPSVSQHLAKLRM) is a DNA-binding region (H-T-H motif). The disordered stretch occupies residues 110–130 (HHRAAGGLQSVAKASATKDVG).

Its activity is regulated as follows. Binding to DNA is inhibited by nickel and cobalt ions. Its function is as follows. Represses expression of Rv2025c and its own expression. Acts by binding to the promoter regions. The sequence is that of HTH-type transcriptional regulator KmtR (kmtR) from Mycobacterium tuberculosis (strain ATCC 25618 / H37Rv).